Consider the following 80-residue polypeptide: MKLLGLSLLAVTILLCCNMARPEIKKKNVFSKPGYCPEYRVPCPFVLIPKCRRDKGCKDALKCCFFYCQMRCVDPWESPE.

The N-terminal stretch at 1 to 20 (MKLLGLSLLAVTILLCCNMA) is a signal peptide. Residues 29–76 (VFSKPGYCPEYRVPCPFVLIPKCRRDKGCKDALKCCFFYCQMRCVDPW) enclose the WAP domain. Intrachain disulfides connect cysteine 36–cysteine 64, cysteine 43–cysteine 68, cysteine 51–cysteine 63, and cysteine 57–cysteine 72.

As to expression, constitutively expressed in kidney and epididymis.

The protein resides in the secreted. Functionally, antibacterial protein which inhibits the growth of E.coli and S.aureus. The chain is WAP four-disulfide core domain protein 15B (Wfdc15b) from Mus musculus (Mouse).